Reading from the N-terminus, the 475-residue chain is Chromosomal replication initiator protein DnaA (475 aa).

The domain I, interacts with DnaA modulators stretch occupies residues 1-71 (MTNDTWNEVR…RQLSAHGAGA (71 aa)). A domain II region spans residues 71–133 (ADRVKFTVSP…PAQPRELPGA (63 aa)). Residues 107-127 (APAPVHHTAPAPAPVAAPAQP) show a composition bias toward low complexity. The interval 107–129 (APAPVHHTAPAPAPVAAPAQPRE) is disordered. Residues 134-355 (KLNPNFTFAN…GALTRLFAFA (222 aa)) are domain III, AAA+ region. Residues Gly178, Gly180, Lys181, and Thr182 each coordinate ATP. A domain IV, binds dsDNA region spans residues 356–475 (DLVRREVTVD…AELLRRTLEA (120 aa)).

This sequence belongs to the DnaA family. As to quaternary structure, oligomerizes as a right-handed, spiral filament on DNA at oriC.

It is found in the cytoplasm. Plays an essential role in the initiation and regulation of chromosomal replication. ATP-DnaA binds to the origin of replication (oriC) to initiate formation of the DNA replication initiation complex once per cell cycle. Binds the DnaA box (a 9 base pair repeat at the origin) and separates the double-stranded (ds)DNA. Forms a right-handed helical filament on oriC DNA; dsDNA binds to the exterior of the filament while single-stranded (ss)DNA is stabiized in the filament's interior. The ATP-DnaA-oriC complex binds and stabilizes one strand of the AT-rich DNA unwinding element (DUE), permitting loading of DNA polymerase. After initiation quickly degrades to an ADP-DnaA complex that is not apt for DNA replication. Binds acidic phospholipids. The sequence is that of Chromosomal replication initiator protein DnaA from Jannaschia sp. (strain CCS1).